The chain runs to 991 residues: UvrABC system protein A (991 aa).

48–55 (GLSGSGKS) is a binding site for ATP. ABC transporter domains are found at residues 345–624 (WAKS…PKSL) and 644–972 (NHRR…KFLE). Residue 676–683 (GVSGGGKS) coordinates ATP. The C4-type zinc-finger motif lies at 775 to 801 (CEACQGDGVIKIEMHFLPDVYVTCDVC).

It belongs to the ABC transporter superfamily. UvrA family. In terms of assembly, forms a heterotetramer with UvrB during the search for lesions.

The protein resides in the cytoplasm. Its function is as follows. The UvrABC repair system catalyzes the recognition and processing of DNA lesions. UvrA is an ATPase and a DNA-binding protein. A damage recognition complex composed of 2 UvrA and 2 UvrB subunits scans DNA for abnormalities. When the presence of a lesion has been verified by UvrB, the UvrA molecules dissociate. In Bradyrhizobium diazoefficiens (strain JCM 10833 / BCRC 13528 / IAM 13628 / NBRC 14792 / USDA 110), this protein is UvrABC system protein A.